Reading from the N-terminus, the 715-residue chain is MSLELEWMSIDDLKLPSNVIDIIKNRGIKKLNPPQTEAVKKGLLDGNRLLLTSPTGSGKTLIAEMGIISFLLKNGGKAIYVTPLRALTNEKYLTFKDWESIGFKVAMTSGDYDTDDAWLKNYDIIITTYEKLDSLWRHRPDWLNEANYFVLDELHYLNDPERGPVVESVTIRAKRRNLLALSATISNYKQIAKWLGAEPVATNWRPVPLMEGVMYPERKKKEYTILFRDNTTRKVHGDDAIIAYTLDSLSKNGQVLVFRNSRKMAESTALKIANYMNFVSLDEKAISEILNQLDDIEEGGSDEKELLKSLISKGVAYHHAGLSKALRDIIEESFRKRKIKVIVATPTLAAGVNLPARTVIIGDIYRFNRKIVGYYDEIPVMEYKQMSGRAGRPGFDQIGESIIVVRDKEDVDRVFKKYILSDVEPIESKLGSERAFYTFLLGILSAEGSLSEKQLEGFAYESLLAKSLVDVYFDRAIRWLSEHSFIREENNTFTLTNFGKRVADLYINPFTADIIRKGLEGHKASCEIAYLHLLAFTPDGPLVSVGRNEEEELIELLEDLECELLVEEPYEEDEYSLYLNALKVALIMKDWIDEVDEDTILGKYNIGSGDLRNIVETMDWLTYSAYHLSKELRLDDHSDKLRILNLRVTDGVKEELLELVQIGGVGRKRARLLYNNGIKGLGDVVMNPDRVRNLLGQKLGERVVQEAARLLNRFH.

Residues glutamine 35 and serine 53–threonine 60 contribute to the ATP site. Residues lysine 40–asparagine 203 enclose the Helicase ATP-binding domain. A DEAH box motif is present at residues aspartate 152 to histidine 155. The Helicase C-terminal domain occupies histidine 236–glycine 442.

Belongs to the helicase family. Hel308 subfamily. Monomer. Interacts with PINA ATPase which decreases both DNA helicase activities of this protein.

It catalyses the reaction Couples ATP hydrolysis with the unwinding of duplex DNA by translocating in the 3'-5' direction.. It carries out the reaction ATP + H2O = ADP + phosphate + H(+). The enzyme catalyses Couples ATP hydrolysis with the unwinding of duplex DNA at the replication fork by translocating in the 5'-3' direction. This creates two antiparallel DNA single strands (ssDNA). The leading ssDNA polymer is the template for DNA polymerase III holoenzyme which synthesizes a continuous strand.. PINA inhibits the (weak) 5'-3' but not the 3'-5' helicase activity of this protein on overhang substrates. In terms of biological role, DNA-dependent ATPase and 3'-5' DNA helicase that may be involved in repair of stalled replication forks. Has predominantly 3'-5' helicase activity but also a weak 5'-3' helicase activity. Has the ability to unwind replication forks, preferentially removing the lagging strand. Hjc, Hjm (Hel308) and branch migration ATPase PINA coordinate HJ migration and cleavage of replication forks in a coordinated way. The chain is ATP-dependent DNA helicase Hel308 from Saccharolobus islandicus (strain REY15A) (Sulfolobus islandicus).